Reading from the N-terminus, the 98-residue chain is Acylphosphatase (98 aa).

The Acylphosphatase-like domain maps to 10-96 (ARLLRIRGRV…TDGAGFDCLP (87 aa)). Residues arginine 25 and asparagine 43 contribute to the active site.

Belongs to the acylphosphatase family.

It carries out the reaction an acyl phosphate + H2O = a carboxylate + phosphate + H(+). The polypeptide is Acylphosphatase (acyP) (Azoarcus sp. (strain BH72)).